Reading from the N-terminus, the 160-residue chain is Single-stranded DNA-binding protein 3 (160 aa).

An SSB domain is found at 2–104 (MNRVVLVGRL…IVAESVQFLE (103 aa)). The span at 106–133 (KQNGAGGSTSNNNQSETNYSNDNKTSSY) shows a compositional bias: polar residues. Residues 106 to 160 (KQNGAGGSTSNNNQSETNYSNDNKTSSYRADRSQNGDSFANEGAPVDINPDDLPF) are disordered.

In terms of assembly, homotetramer.

The polypeptide is Single-stranded DNA-binding protein 3 (ssb3) (Listeria innocua serovar 6a (strain ATCC BAA-680 / CLIP 11262)).